Here is a 430-residue protein sequence, read N- to C-terminus: Neuropeptide FF receptor 1 (430 aa).

The segment at 1–20 (MEGEPSQPPNSSWPLSQNGT) is disordered. Topologically, residues 1 to 43 (MEGEPSQPPNSSWPLSQNGTNTEATPATNLTFSSYYQHTSPVA) are extracellular. Over residues 9-20 (PNSSWPLSQNGT) the composition is skewed to polar residues. N10, N18, and N29 each carry an N-linked (GlcNAc...) asparagine glycan. A helical transmembrane segment spans residues 44–64 (AMFIVAYALIFLLCMVGNTLV). Residues 65 to 80 (CFIVLKNRHMHTVTNM) lie on the Cytoplasmic side of the membrane. Residues 81–101 (FILNLAVSDLLVGIFCMPTTL) form a helical membrane-spanning segment. At 102-117 (VDNLITGWPFDNATCK) the chain is on the extracellular side. N113 carries an N-linked (GlcNAc...) asparagine glycan. C116 and C203 are oxidised to a cystine. A helical transmembrane segment spans residues 118–138 (MSGLVQGMSVSASVFTLVAIA). The Cytoplasmic portion of the chain corresponds to 139 to 158 (VERFRCIVHPFREKLTLRKA). A helical transmembrane segment spans residues 159 to 179 (LVTIAVIWALALLIMCPSAVT). Topologically, residues 180-214 (LTVTREEHHFMVDARNRSYPLYSCWEAWPEKGMRR) are extracellular. N195 carries an N-linked (GlcNAc...) asparagine glycan. The chain crosses the membrane as a helical span at residues 215 to 235 (VYTTVLFSHIYLAPLALIVVM). At 236 to 271 (YARIARKLCQAPGPAPGGEEAADPRASRRRARVVHM) the chain is on the cytoplasmic side. The helical transmembrane segment at 272–292 (LVMVALFFTLSWLPLWALLLL) threads the bilayer. At 293-307 (IDYGQLSAPQLHLVT) the chain is on the extracellular side. The chain crosses the membrane as a helical span at residues 308–328 (VYAFPFAHWLAFFNSSANPII). The Cytoplasmic portion of the chain corresponds to 329 to 430 (YGYFNENFRR…LPLTIPAWDI (102 aa)). A compositionally biased stretch (low complexity) spans 379 to 404 (SDSGLPSESGPSSGAPRPGRLPLRNG). The segment at 379–413 (SDSGLPSESGPSSGAPRPGRLPLRNGRVAHHGLPR) is disordered.

Belongs to the G-protein coupled receptor 1 family.

It is found in the cell membrane. Its function is as follows. Receptor for NPAF (A-18-F-amide) and NPFF (F-8-F-amide) neuropeptides, also known as morphine-modulating peptides. Can also be activated by a variety of naturally occurring or synthetic FMRF-amide like ligands. This receptor mediates its action by association with G proteins that activate a phosphatidylinositol-calcium second messenger system. This chain is Neuropeptide FF receptor 1, found in Homo sapiens (Human).